The following is a 123-amino-acid chain: Fluoride-specific ion channel FluC (123 aa).

4 helical membrane passes run 6 to 26, 38 to 58, 68 to 88, and 100 to 120; these read VALV…LSGV, LLVN…IFWG, FLGT…YETF, and LLNI…GFVL. Na(+) is bound by residues Gly-75 and Ser-78.

Belongs to the fluoride channel Fluc/FEX (TC 1.A.43) family.

The protein resides in the cell membrane. The catalysed reaction is fluoride(in) = fluoride(out). Na(+) is not transported, but it plays an essential structural role and its presence is essential for fluoride channel function. Functionally, fluoride-specific ion channel. Important for reducing fluoride concentration in the cell, thus reducing its toxicity. This chain is Fluoride-specific ion channel FluC, found in Pyrococcus furiosus (strain ATCC 43587 / DSM 3638 / JCM 8422 / Vc1).